A 67-amino-acid polypeptide reads, in one-letter code: Vespin (67 aa).

The first 21 residues, 1–21 (MHPIIWELSHMVDLQAAAQKL), serve as a signal peptide directing secretion.

In terms of tissue distribution, expressed by the venom gland.

Its subcellular location is the secreted. Shows contractile activity on isolated ileum smooth muscle. This chain is Vespin, found in Vespa magnifica (Hornet).